A 286-amino-acid chain; its full sequence is L-cysteine S-thiosulfotransferase subunit SoxA (286 aa).

Residues 1 to 28 (MKKTIQRGLFTGALVLLTAMTSKPAHAA) form the signal peptide. C106 and C137 are oxidised to a cystine. Residues 180 to 286 (DAYMKGKEMF…LKFNGPASRK (107 aa)) form the Cytochrome c domain. Heme-binding residues include C200 and H204. R243 contributes to the substrate binding site. Residue C247 coordinates heme. C247 (cysteine persulfide intermediate) is an active-site residue.

Belongs to the SoxA family. In terms of assembly, heterodimer of SoxA and SoxX. The SoxAX complex interacts with CT1020, SoxAX-binding protein SaxB (SoxK); this interaction stimulates catalytic activity of the complex. Heme is required as a cofactor. In terms of processing, cysteine persulfide at Cys-247.

The protein localises to the periplasm. It carries out the reaction L-cysteinyl-[SoxY protein] + thiosulfate + 2 Fe(III)-[cytochrome c] = S-sulfosulfanyl-L-cysteinyl-[SoxY protein] + 2 Fe(II)-[cytochrome c] + 2 H(+). The enzyme catalyses S-sulfanyl-L-cysteinyl-[SoxY protein] + thiosulfate + 2 Fe(III)-[cytochrome c] = S-(2-sulfodisulfanyl)-L-cysteinyl-[SoxY protein] + 2 Fe(II)-[cytochrome c] + 2 H(+). Its function is as follows. C-type monoheme cytochrome, which is part of the SoxAX cytochrome complex involved in sulfur oxidation. The SoxAX complex catalyzes the formation of a heterodisulfide bond between the conserved cysteine residue on a sulfur carrier SoxYZ complex subunit SoxY and thiosulfate or other inorganic sulfur substrates. This leads to the liberation of two electrons, which may be transferred from the SoxAX complex to another cytochrome c and which then may be used for reductive CO(2) fixation. The polypeptide is L-cysteine S-thiosulfotransferase subunit SoxA (Chlorobaculum thiosulfatiphilum (Chlorobium limicola f.sp. thiosulfatophilum)).